The following is a 204-amino-acid chain: LexA repressor (204 aa).

Residues 27–47 (VREIGEAVGLASSSTVHGHLA) constitute a DNA-binding region (H-T-H motif). Active-site for autocatalytic cleavage activity residues include Ser126 and Lys164.

This sequence belongs to the peptidase S24 family. Homodimer.

The enzyme catalyses Hydrolysis of Ala-|-Gly bond in repressor LexA.. In terms of biological role, represses a number of genes involved in the response to DNA damage (SOS response), including recA and lexA. In the presence of single-stranded DNA, RecA interacts with LexA causing an autocatalytic cleavage which disrupts the DNA-binding part of LexA, leading to derepression of the SOS regulon and eventually DNA repair. In Listeria welshimeri serovar 6b (strain ATCC 35897 / DSM 20650 / CCUG 15529 / CIP 8149 / NCTC 11857 / SLCC 5334 / V8), this protein is LexA repressor.